The sequence spans 934 residues: uncharacterized protein (934 aa).

A signal peptide spans 1–24; it reads MKLKKRYLLLGSTLTVSAALILSA. Residue Cys25 is the site of N-palmitoyl cysteine attachment. The S-diacylglycerol cysteine moiety is linked to residue Cys25. The segment at 111 to 131 is disordered; sequence SGLKGRAQKNGSTDSSDGSSK. Residues 119–131 show a composition bias toward polar residues; sequence KNGSTDSSDGSSK.

It localises to the cell membrane. This is an uncharacterized protein from Mycoplasma genitalium (strain ATCC 33530 / DSM 19775 / NCTC 10195 / G37) (Mycoplasmoides genitalium).